Reading from the N-terminus, the 156-residue chain is 6,7-dimethyl-8-ribityllumazine synthase (156 aa).

5-amino-6-(D-ribitylamino)uracil is bound by residues phenylalanine 28, 62–64 (ALE), and 86–88 (AVI). 91 to 92 (ET) lines the (2S)-2-hydroxy-3-oxobutyl phosphate pocket. The active-site Proton donor is histidine 94. 5-amino-6-(D-ribitylamino)uracil is bound at residue asparagine 119. Arginine 133 contacts (2S)-2-hydroxy-3-oxobutyl phosphate.

The protein belongs to the DMRL synthase family.

The catalysed reaction is (2S)-2-hydroxy-3-oxobutyl phosphate + 5-amino-6-(D-ribitylamino)uracil = 6,7-dimethyl-8-(1-D-ribityl)lumazine + phosphate + 2 H2O + H(+). The protein operates within cofactor biosynthesis; riboflavin biosynthesis; riboflavin from 2-hydroxy-3-oxobutyl phosphate and 5-amino-6-(D-ribitylamino)uracil: step 1/2. Catalyzes the formation of 6,7-dimethyl-8-ribityllumazine by condensation of 5-amino-6-(D-ribitylamino)uracil with 3,4-dihydroxy-2-butanone 4-phosphate. This is the penultimate step in the biosynthesis of riboflavin. This Azoarcus sp. (strain BH72) protein is 6,7-dimethyl-8-ribityllumazine synthase.